A 905-amino-acid chain; its full sequence is Coatomer subunit beta' (905 aa).

WD repeat units follow at residues 13-52 (AMSD…LVKT), 55-94 (VCDL…RVHM), 97-136 (AHSD…SCSQ), 140-180 (GHTH…PNFT), 183-224 (GHEK…CVQT), 227-266 (GHAQ…LEST), 350-388 (SCEI…NKSF), and 390-425 (SAQE…KSFK). Residue Lys627 is modified to N6-acetyllysine. Residues 746 to 783 (IRTGRLPEAAFLARTYLPSQVSRVVKLWRENLSKVNQK) form a WD 9 repeat. Residues 837 to 905 (EEAKRFQPSR…INLDEDILDD (69 aa)) are disordered. Position 859 is a phosphoserine (Ser859). A coiled-coil region spans residues 867–891 (QTTHKEEKSFQELEDDLDTMELEDI). Over residues 878 to 905 (ELEDDLDTMELEDIDTTDINLDEDILDD) the composition is skewed to acidic residues.

This sequence belongs to the WD repeat COPB2 family. As to quaternary structure, oligomeric complex that consists of at least the alpha, beta, beta', gamma, delta, epsilon and zeta subunits. Probably interacts with PEX11A. Interacts with JAGN1. Interacts with SCYL1.

The protein localises to the cytoplasm. The protein resides in the cytosol. It is found in the golgi apparatus membrane. It localises to the cytoplasmic vesicle. Its subcellular location is the COPI-coated vesicle membrane. Functionally, the coatomer is a cytosolic protein complex that binds to dilysine motifs and reversibly associates with Golgi non-clathrin-coated vesicles, which further mediate biosynthetic protein transport from the ER, via the Golgi up to the trans Golgi network. Coatomer complex is required for budding from Golgi membranes, and is essential for the retrograde Golgi-to-ER transport of dilysine-tagged proteins. In mammals, the coatomer can only be recruited by membranes associated to ADP-ribosylation factors (ARFs), which are small GTP-binding proteins; the complex also influences the Golgi structural integrity, as well as the processing, activity, and endocytic recycling of LDL receptors. Its function is as follows. This coatomer complex protein, essential for Golgi budding and vesicular trafficking, is a selective binding protein (RACK) for protein kinase C, epsilon type. It binds to Golgi membranes in a GTP-dependent manner. The polypeptide is Coatomer subunit beta' (Copb2) (Rattus norvegicus (Rat)).